Consider the following 50-residue polypeptide: AEDSRGTQLHRALRKTTKLSLSIRCKGPGASCIRIAYNCCKYSCRNGKCS.

A signal peptide is located at residue alanine 1. The propeptide occupies 2–24 (EDSRGTQLHRALRKTTKLSLSIR). Disulfide bonds link cysteine 25-cysteine 40, cysteine 32-cysteine 44, and cysteine 39-cysteine 49.

It belongs to the conotoxin O1 superfamily. In terms of tissue distribution, expressed by the venom duct.

It localises to the secreted. The chain is Conotoxin Bu13 from Conus bullatus (Bubble cone).